The primary structure comprises 375 residues: MVEIGMGRVARRTYELREISIVPSRRTRSSKDVSTAWQLDAYRFEIPVVAHPTDALVSPEFAIELGRLGGLGVLNGEGLIGRHADVGAKVAQLIEAAEKEPEPATAVCLLQELHAAPLNPDLLGSAVARIREAGVTTAVRVSPQNAQVLTPVLLAAGIDLLVVQGSIVSAECVASGGEPLNLKTFISELDVPVVAGGVLDHRTALHLMRTGAAGVIVGYGSTRGATTSDEVLGISVPMATAIADAAAARREYLDETGGRYVHVLADGDIYTSGELAKAIACGADAVVLGTPLAQSAEALGGGWFWPAAAAHPSLPRGALLQTAVGERPSLQQVLNGPSDNPFGTLNLVGGLRRSMAKAGYCDLKEFQKVGLIVSI.

It belongs to the IMPDH/GMPR family.

This is an uncharacterized protein from Mycobacterium leprae (strain TN).